The sequence spans 396 residues: 1-deoxy-D-xylulose 5-phosphate reductoisomerase (396 aa).

Residues threonine 17, glycine 18, serine 19, isoleucine 20, asparagine 47, and asparagine 130 each contribute to the NADPH site. 1-deoxy-D-xylulose 5-phosphate is bound at residue lysine 131. Glutamate 132 is a binding site for NADPH. Position 156 (aspartate 156) interacts with Mn(2+). The 1-deoxy-D-xylulose 5-phosphate site is built by serine 157, glutamate 158, serine 182, and histidine 205. Mn(2+) is bound at residue glutamate 158. NADPH is bound at residue glycine 211. Residues serine 218, asparagine 223, lysine 224, and glutamate 227 each contribute to the 1-deoxy-D-xylulose 5-phosphate site. Residue glutamate 227 participates in Mn(2+) binding.

It belongs to the DXR family. Mg(2+) serves as cofactor. Mn(2+) is required as a cofactor.

It carries out the reaction 2-C-methyl-D-erythritol 4-phosphate + NADP(+) = 1-deoxy-D-xylulose 5-phosphate + NADPH + H(+). It participates in isoprenoid biosynthesis; isopentenyl diphosphate biosynthesis via DXP pathway; isopentenyl diphosphate from 1-deoxy-D-xylulose 5-phosphate: step 1/6. Its function is as follows. Catalyzes the NADPH-dependent rearrangement and reduction of 1-deoxy-D-xylulose-5-phosphate (DXP) to 2-C-methyl-D-erythritol 4-phosphate (MEP). This is 1-deoxy-D-xylulose 5-phosphate reductoisomerase from Rhizobium etli (strain ATCC 51251 / DSM 11541 / JCM 21823 / NBRC 15573 / CFN 42).